Reading from the N-terminus, the 94-residue chain is Integration host factor subunit beta (94 aa).

Belongs to the bacterial histone-like protein family. In terms of assembly, heterodimer of an alpha and a beta chain.

This protein is one of the two subunits of integration host factor, a specific DNA-binding protein that functions in genetic recombination as well as in transcriptional and translational control. The polypeptide is Integration host factor subunit beta (Yersinia enterocolitica serotype O:8 / biotype 1B (strain NCTC 13174 / 8081)).